A 330-amino-acid chain; its full sequence is Mas-related G-protein coupled receptor member X2 (330 aa).

Residues 1-33 lie on the Extracellular side of the membrane; that stretch reads MDPTTPAWGNESTTMNGNDQALPLLCGKETLIP. A helical membrane pass occupies residues 34-54; the sequence is VFLILFIALVGLVGNGFVLWL. Residues 55 to 63 lie on the Cytoplasmic side of the membrane; that stretch reads LGFCMRRNA. The helical transmembrane segment at 64–84 threads the bilayer; that stretch reads FSVYVLSLAGADFLFLCFQLI. Over 85 to 96 the chain is Extracellular; the sequence is NCLVYLSNFFCS. Residues 97–117 form a helical membrane-spanning segment; it reads ISIDFPSFFTTVMTCAYLAGL. Over 118-144 the chain is Cytoplasmic; sequence SMLSTISTERCLSVLWPIWYRCRRPRH. A helical transmembrane segment spans residues 145–165; it reads LSAVVCVLLWALSLLLSILEG. Over 166–184 the chain is Extracellular; the sequence is KFCGFFFSDGDSGWCQTFD. Residues 185–205 form a helical membrane-spanning segment; sequence FITAAWLIFLFMVLCGSSLAL. Residues 206–228 lie on the Cytoplasmic side of the membrane; it reads LVRILCGSRGLPLTRLYLTILLT. The helical transmembrane segment at 229–249 threads the bilayer; the sequence is VLVFLLCGLPFGIQWFLILWI. Topologically, residues 250–264 are extracellular; that stretch reads WENSDVLFCHIHPVS. A helical transmembrane segment spans residues 265 to 285; it reads VVLSSLNSSANPIIYFFVGTF. Over 286–330 the chain is Cytoplasmic; the sequence is RKQWRLQQPILKLALQRALQDTAEVDHSEGCFRQGTPEMSRSSLV.

This sequence belongs to the G-protein coupled receptor 1 family. Mas subfamily.

The protein localises to the cell membrane. Functionally, mast cell-specific receptor for basic secretagogues, i.e. cationic amphiphilic drugs, as well as endo- or exogenous peptides, consisting of a basic head group and a hydrophobic core. Recognizes and binds small molecules containing a cyclized tetrahydroisoquinoline (THIQ), such as non-steroidal neuromuscular blocking drugs (NMBDs), including tubocurarine and atracurium. In response to these compounds, mediates pseudo-allergic reactions characterized by histamine release, inflammation and airway contraction. The protein is Mas-related G-protein coupled receptor member X2 (MRGPRX2) of Pongo pygmaeus (Bornean orangutan).